We begin with the raw amino-acid sequence, 427 residues long: Glutamate-1-semialdehyde 2,1-aminomutase (427 aa).

The residue at position 265 (Lys-265) is an N6-(pyridoxal phosphate)lysine.

This sequence belongs to the class-III pyridoxal-phosphate-dependent aminotransferase family. HemL subfamily. As to quaternary structure, homodimer. Pyridoxal 5'-phosphate is required as a cofactor.

It is found in the cytoplasm. It carries out the reaction (S)-4-amino-5-oxopentanoate = 5-aminolevulinate. The protein operates within porphyrin-containing compound metabolism; protoporphyrin-IX biosynthesis; 5-aminolevulinate from L-glutamyl-tRNA(Glu): step 2/2. This Colwellia psychrerythraea (strain 34H / ATCC BAA-681) (Vibrio psychroerythus) protein is Glutamate-1-semialdehyde 2,1-aminomutase.